The sequence spans 366 residues: RNA 3'-terminal phosphate cyclase (366 aa).

ATP contacts are provided by Gln-104, Pro-131, Tyr-294, Asp-297, Gln-298, and His-320. The active-site Tele-AMP-histidine intermediate is His-320.

This sequence belongs to the RNA 3'-terminal cyclase family. Type 1 subfamily. In terms of tissue distribution, detected in retinal ganglion cells (RGCs) (at protein level).

It localises to the nucleus. It is found in the nucleoplasm. It carries out the reaction a 3'-end 3'-phospho-ribonucleotide-RNA + ATP = a 3'-end 2',3'-cyclophospho-ribonucleotide-RNA + AMP + diphosphate. In terms of biological role, catalyzes the conversion of 3'-phosphate to a 2',3'-cyclic phosphodiester at the end of RNA. The mechanism of action of the enzyme occurs in 3 steps: (A) adenylation of the enzyme by ATP; (B) transfer of adenylate to an RNA-N3'P to produce RNA-N3'PP5'A; (C) and attack of the adjacent 2'-hydroxyl on the 3'-phosphorus in the diester linkage to produce the cyclic end product. Likely functions in some aspects of cellular RNA processing. Function plays an important role in regulating axon regeneration by inhibiting central nervous system (CNS) axon regeneration following optic nerve injury. In Mus musculus (Mouse), this protein is RNA 3'-terminal phosphate cyclase.